Here is a 311-residue protein sequence, read N- to C-terminus: 4-hydroxy-tetrahydrodipicolinate synthase (311 aa).

Position 49 (Thr49) interacts with pyruvate. Tyr138 functions as the Proton donor/acceptor in the catalytic mechanism. Lys166 functions as the Schiff-base intermediate with substrate in the catalytic mechanism. Ile207 is a pyruvate binding site.

It belongs to the DapA family. As to quaternary structure, homotetramer; dimer of dimers.

Its subcellular location is the cytoplasm. It carries out the reaction L-aspartate 4-semialdehyde + pyruvate = (2S,4S)-4-hydroxy-2,3,4,5-tetrahydrodipicolinate + H2O + H(+). Its pathway is amino-acid biosynthesis; L-lysine biosynthesis via DAP pathway; (S)-tetrahydrodipicolinate from L-aspartate: step 3/4. Its function is as follows. Catalyzes the condensation of (S)-aspartate-beta-semialdehyde [(S)-ASA] and pyruvate to 4-hydroxy-tetrahydrodipicolinate (HTPA). The sequence is that of 4-hydroxy-tetrahydrodipicolinate synthase from Lactobacillus acidophilus (strain ATCC 700396 / NCK56 / N2 / NCFM).